We begin with the raw amino-acid sequence, 288 residues long: NAD kinase (288 aa).

The Proton acceptor role is filled by aspartate 73. Residues 73-74 (DG), arginine 78, 144-145 (NE), aspartate 174, 185-190 (TAYSLS), and alanine 209 contribute to the NAD(+) site.

It belongs to the NAD kinase family. A divalent metal cation serves as cofactor.

Its subcellular location is the cytoplasm. It carries out the reaction NAD(+) + ATP = ADP + NADP(+) + H(+). Its function is as follows. Involved in the regulation of the intracellular balance of NAD and NADP, and is a key enzyme in the biosynthesis of NADP. Catalyzes specifically the phosphorylation on 2'-hydroxyl of the adenosine moiety of NAD to yield NADP. The polypeptide is NAD kinase (Porphyromonas gingivalis (strain ATCC 33277 / DSM 20709 / CIP 103683 / JCM 12257 / NCTC 11834 / 2561)).